The sequence spans 198 residues: Na(+)-translocating NADH-quinone reductase subunit E (198 aa).

Transmembrane regions (helical) follow at residues 11 to 31, 39 to 59, 77 to 97, 110 to 130, 140 to 160, and 176 to 196; these read SIFI…FLAV, FGLG…NNLV, FLNF…LEMV, GIFL…SFMV, IVYG…LAGI, and LGIT…FSGV.

It belongs to the NqrDE/RnfAE family. In terms of assembly, composed of six subunits; NqrA, NqrB, NqrC, NqrD, NqrE and NqrF.

It localises to the cell inner membrane. It carries out the reaction a ubiquinone + n Na(+)(in) + NADH + H(+) = a ubiquinol + n Na(+)(out) + NAD(+). NQR complex catalyzes the reduction of ubiquinone-1 to ubiquinol by two successive reactions, coupled with the transport of Na(+) ions from the cytoplasm to the periplasm. NqrA to NqrE are probably involved in the second step, the conversion of ubisemiquinone to ubiquinol. The polypeptide is Na(+)-translocating NADH-quinone reductase subunit E (Vibrio campbellii (strain ATCC BAA-1116)).